An 84-amino-acid polypeptide reads, in one-letter code: Small ribosomal subunit protein uS17 (84 aa).

This sequence belongs to the universal ribosomal protein uS17 family. As to quaternary structure, part of the 30S ribosomal subunit.

Functionally, one of the primary rRNA binding proteins, it binds specifically to the 5'-end of 16S ribosomal RNA. The polypeptide is Small ribosomal subunit protein uS17 (Actinobacillus pleuropneumoniae serotype 5b (strain L20)).